A 320-amino-acid chain; its full sequence is GTP 3',8-cyclase (320 aa).

The 221-residue stretch at 5 to 225 (QFGRKINYLR…IQLIKKDEKA (221 aa)) folds into the Radical SAM core domain. Arg-14 contributes to the GTP binding site. [4Fe-4S] cluster is bound by residues Cys-21 and Cys-25. Position 27 (Tyr-27) interacts with S-adenosyl-L-methionine. Cys-28 is a [4Fe-4S] cluster binding site. Arg-64 serves as a coordination point for GTP. Position 68 (Gly-68) interacts with S-adenosyl-L-methionine. Thr-95 is a binding site for GTP. Ser-119 serves as a coordination point for S-adenosyl-L-methionine. A GTP-binding site is contributed by Lys-155. Met-189 is an S-adenosyl-L-methionine binding site. Residues Cys-248 and Cys-251 each coordinate [4Fe-4S] cluster. 253 to 255 (RIR) is a GTP binding site. Cys-265 lines the [4Fe-4S] cluster pocket.

This sequence belongs to the radical SAM superfamily. MoaA family. In terms of assembly, monomer and homodimer. Requires [4Fe-4S] cluster as cofactor.

The catalysed reaction is GTP + AH2 + S-adenosyl-L-methionine = (8S)-3',8-cyclo-7,8-dihydroguanosine 5'-triphosphate + 5'-deoxyadenosine + L-methionine + A + H(+). It participates in cofactor biosynthesis; molybdopterin biosynthesis. In terms of biological role, catalyzes the cyclization of GTP to (8S)-3',8-cyclo-7,8-dihydroguanosine 5'-triphosphate. The protein is GTP 3',8-cyclase of Campylobacter jejuni subsp. jejuni serotype O:6 (strain 81116 / NCTC 11828).